A 360-amino-acid chain; its full sequence is Phosphoserine aminotransferase (360 aa).

Arg41 provides a ligand contact to L-glutamate. Pyridoxal 5'-phosphate is bound by residues Trp101, Thr152, Asp172, and Gln195. At Lys196 the chain carries N6-(pyridoxal phosphate)lysine. Residue 237 to 238 (NT) coordinates pyridoxal 5'-phosphate.

This sequence belongs to the class-V pyridoxal-phosphate-dependent aminotransferase family. SerC subfamily. As to quaternary structure, homodimer. Requires pyridoxal 5'-phosphate as cofactor.

It is found in the cytoplasm. The catalysed reaction is O-phospho-L-serine + 2-oxoglutarate = 3-phosphooxypyruvate + L-glutamate. The enzyme catalyses 4-(phosphooxy)-L-threonine + 2-oxoglutarate = (R)-3-hydroxy-2-oxo-4-phosphooxybutanoate + L-glutamate. It functions in the pathway amino-acid biosynthesis; L-serine biosynthesis; L-serine from 3-phospho-D-glycerate: step 2/3. Its pathway is cofactor biosynthesis; pyridoxine 5'-phosphate biosynthesis; pyridoxine 5'-phosphate from D-erythrose 4-phosphate: step 3/5. Its function is as follows. Catalyzes the reversible conversion of 3-phosphohydroxypyruvate to phosphoserine and of 3-hydroxy-2-oxo-4-phosphonooxybutanoate to phosphohydroxythreonine. The polypeptide is Phosphoserine aminotransferase (Burkholderia vietnamiensis (strain G4 / LMG 22486) (Burkholderia cepacia (strain R1808))).